Consider the following 328-residue polypeptide: MRIIFWGTPEYSVKSLEVLKKSDHDIVAVITQPDKKRSRGNKLISSPVKEYATKENIPVFTPETIKENIQFISILNDLSCDLFIVIAYGKILPKAILDIPKYKSWNAHASLLPRWRGAAPIQWSILEGDKITGVGIMRMEEGLDTGDVLVEKQIKIENNDNLKTLTKKLSDLSSELFLRAISDIEQNKNRDINLLLKKQTDFKRELKYARMINKLDYIINWENSATDIYRKINALYPRANTTYKRKNLKIIKIKILTTHEIHNKNYKILSNVFKPGLIIGLIKNVGIIITTKTDPILLLEAKLEGKKVSSQNQLIQQLNPVIGENFSD.

Residue 110–113 (SLLP) coordinates (6S)-5,6,7,8-tetrahydrofolate.

This sequence belongs to the Fmt family.

The catalysed reaction is L-methionyl-tRNA(fMet) + (6R)-10-formyltetrahydrofolate = N-formyl-L-methionyl-tRNA(fMet) + (6S)-5,6,7,8-tetrahydrofolate + H(+). Its function is as follows. Attaches a formyl group to the free amino group of methionyl-tRNA(fMet). The formyl group appears to play a dual role in the initiator identity of N-formylmethionyl-tRNA by promoting its recognition by IF2 and preventing the misappropriation of this tRNA by the elongation apparatus. This chain is Methionyl-tRNA formyltransferase, found in Prochlorococcus marinus subsp. pastoris (strain CCMP1986 / NIES-2087 / MED4).